We begin with the raw amino-acid sequence, 544 residues long: MTDNTDMEKLDRATTPTPIPNEAPPTSEPSESKPEEAEDESKYPHGLKLAAIILSNMVAMFLVALDRTIIATAIPRITDDFNALGDISWYASAYLITSSATQLLWGRIFTFYPTKTVYLVAIFFFELGSLLCGVAPNSVAFIIGRAIAGAGSAGIYSGSTILITTVTPLSKRAGYVGMMGAVFGIASVIAPLIGGAFTDHVTWRWCFYINLPVGGAAVACLILLFPKFPVNEPVSVKQQIKQLDPWGNLVFLPGVICLILALQWGGEKYAWDSGRIVALLVLACVLLLVFIGIQIWQQENATVPPRLFKIRNVWLGTIFAFCLGSVLIVFLIALPIWFQGIRGTDAITSGIDTLPLVLSLVFGAIVSGGVINGVGWFNPVFFSSVIFMSVGGGLITTFVVDTPTRTWIGYQIILGLGIGQGMQLASLGTQVAVKQSDVPTGVSLMFFAQSLGGSVLVCVAQAVFNNELRSRLTSFDGIDVARIIGTGATQLRHVIPADRLAEVLVEYNAALRSYFYVGLAAACFAVLPSLGIEWKNVKGQEFVH.

The span at Met1 to Arg12 shows a compositional bias: basic and acidic residues. Residues Met1–Lys42 are disordered. Over residues Thr17–Ser27 the composition is skewed to pro residues. A compositionally biased stretch (basic and acidic residues) spans Ser30 to Lys42. The next 8 helical transmembrane spans lie at His45–Leu65, Trp89–Phe111, Thr116–Pro136, Ala146–Val166, Gly177–Phe197, Trp205–Phe225, Trp246–Gly266, and Ile276–Trp296. Asn300 is a glycosylation site (N-linked (GlcNAc...) asparagine). The next 6 helical transmembrane spans lie at Ile318–Phe338, Val357–Phe377, Val380–Val400, Trp407–Leu427, Leu444–Phe464, and Tyr514–Trp534.

It belongs to the major facilitator superfamily. TCR/Tet family.

The protein resides in the cell membrane. It functions in the pathway pigment biosynthesis. Its function is as follows. Rubrofusarin-specific efflux pump; part of the gene cluster that mediates the biosynthesis of aurofusarin, a red mycelium pigment which is acting as a mycotoxin. The first step is performed by the polyketide synthase which condenses one acetyl-CoA and 6 malonyl-CoA units to form the first intermediate, the cyclic heptaketide and yellow pigment YWA1. The C2 hydroxyl group in the pyrone ring of YWA1 is probably formed during ring closure by an aldol-type cyclization reaction. The dehydratase aurZ then acts as the first tailoring enzyme in the aurofusarin biosynthetic pathway by converting YWA1 to nor-rubrofusarin. Nor-rubrofusarin is then methylated to rubrofusarin by the O-methyltransferase aurJ. Rubrofusarin is then transported across the plasma membrane by the rubrofusarin-specific pump aurT for further enzymatic processing by the extracellular complex composed of GIP1, aurF, aurO and aurS to yield aurofusarin. The sequence is that of Rubrofusarin-specific efflux pump aurT from Gibberella zeae (strain ATCC MYA-4620 / CBS 123657 / FGSC 9075 / NRRL 31084 / PH-1) (Wheat head blight fungus).